The following is a 727-amino-acid chain: Zinc metalloproteinase nas-38 (727 aa).

Residues 1-25 (MPSPSYNRHIIIASCFCCLLIFSSA) form the signal peptide. A propeptide spanning residues 26 to 114 (ARVPKASKKH…FTQGKREKRK (89 aa)) is cleaved from the precursor. Residues 113 to 312 (RKIGRNPLYK…QAINMAYGCT (200 aa)) form the Peptidase M12A domain. Cystine bridges form between Cys158/Cys311 and Cys179/Cys199. His207 lines the Zn(2+) pocket. Glu208 is an active-site residue. Zn(2+) is bound by residues His211 and His217. In terms of domain architecture, EGF-like spans 306–345 (NMAYGCTESCADLPCLRNGYTHPNNCSMCACPEGLSGRYC). N-linked (GlcNAc...) asparagine glycosylation occurs at Asn330. Residues 353–469 (AQCGGVIFAT…AGFKAKFWSN (117 aa)) form the CUB domain. Disulfide bonds link Cys355–Cys383 and Cys411–Cys432. 2 disordered regions span residues 473-506 (PEGVSTPLPPTTAPLPEISETTQKPEPTTVQSTT) and 532-561 (TPLTSSSTTTESTTVSSTTQSTTWLPTEPS). Low complexity predominate over residues 535–554 (TSSSTTTESTTVSSTTQSTT). The 49-residue stretch at 610 to 658 (ECGCGAWSEWQGECSQQCGGCGHRLRKRECKKEACRKEEKRPCNFSACP) folds into the TSP type-1 domain. 4 disulfide bridges follow: Cys611/Cys644, Cys623/Cys652, Cys627/Cys657, and Cys639/Cys644. N-linked (GlcNAc...) asparagine glycans are attached at residues Asn653 and Asn714.

The cofactor is Zn(2+). As to expression, expressed in the epidermis, the excretory canal cell, duct cell, pore cell, and excretory gland cell. Expressed in an oscillating pattern in epithelial cells with increased expression during the lethargus phase which occurs during molting between larval and adult stages. Not expressed in seam cells or in the RIS neuron.

Its subcellular location is the secreted. Metalloprotease. As part of the innate immune response to molting and injury to the adult epidermis, positively regulates the activity of the transcription factor sta-2 to promote the expression of epidermal antimicrobial peptides such as nlp-29. Through regulating the expression of epidermal antimicrobial peptides such as nlp-29, modulates sleep duration and locomotion quiescence during the sleep-like state called lethargus which occurs during molting between larval and adult stages. This may occur through the sleep-active RIS neuron. The chain is Zinc metalloproteinase nas-38 from Caenorhabditis elegans.